A 607-amino-acid chain; its full sequence is Tungsten-containing aldehyde ferredoxin oxidoreductase (607 aa).

Residues arginine 76, asparagine 93, glycine 95, arginine 182, alanine 183, glycine 185, and arginine 186 each contribute to the tungstopterin site. Cysteine 288, cysteine 291, and cysteine 295 together coordinate [4Fe-4S] cluster. The tungstopterin site is built by aspartate 338, aspartate 343, arginine 446, lysine 452, aspartate 491, and leucine 495. Residue cysteine 496 coordinates [4Fe-4S] cluster. Isoleucine 497 contributes to the tungstopterin binding site.

The protein belongs to the AOR/FOR family. Homodimer. It depends on [4Fe-4S] cluster as a cofactor. Tungstopterin is required as a cofactor.

The enzyme catalyses an aldehyde + 2 oxidized [2Fe-2S]-[ferredoxin] + H2O = a carboxylate + 2 reduced [2Fe-2S]-[ferredoxin] + 3 H(+). The polypeptide is Tungsten-containing aldehyde ferredoxin oxidoreductase (aor) (Pyrococcus horikoshii (strain ATCC 700860 / DSM 12428 / JCM 9974 / NBRC 100139 / OT-3)).